We begin with the raw amino-acid sequence, 87 residues long: Large ribosomal subunit protein bL27 (87 aa).

It belongs to the bacterial ribosomal protein bL27 family.

The chain is Large ribosomal subunit protein bL27 from Dechloromonas aromatica (strain RCB).